The sequence spans 581 residues: Probable peptidoglycan D,D-transpeptidase PenA (581 aa).

A helical membrane pass occupies residues 28-48 (ISFVLMAMAVLFACLIARGLY). The Acyl-ester intermediate role is filled by Ser310.

It belongs to the transpeptidase family. FtsI subfamily.

The protein resides in the cell inner membrane. The catalysed reaction is Preferential cleavage: (Ac)2-L-Lys-D-Ala-|-D-Ala. Also transpeptidation of peptidyl-alanyl moieties that are N-acyl substituents of D-alanine.. It functions in the pathway cell wall biogenesis; peptidoglycan biosynthesis. Catalyzes cross-linking of the peptidoglycan cell wall at the division septum. This chain is Probable peptidoglycan D,D-transpeptidase PenA, found in Neisseria gonorrhoeae.